A 158-amino-acid chain; its full sequence is Developmental pluripotency-associated protein 3 (158 aa).

Disordered regions lie at residues 1–38 (MDEP…EILQ) and 54–78 (SAKP…VENR). A compositionally biased stretch (acidic residues) spans 26–35 (DEGDSPDDSE). A compositionally biased stretch (basic residues) spans 58–68 (TKYHRRQRVRL).

It is found in the nucleus. Its subcellular location is the cytoplasm. Functionally, primordial germ cell (PGCs)-specific protein involved in epigenetic chromatin reprogramming in the zygote following fertilization. In zygotes, DNA demethylation occurs selectively in the paternal pronucleus before the first cell division, while the adjacent maternal pronucleus and certain paternally-imprinted loci are protected from this process. Participates in protection of DNA methylation in the maternal pronucleus by preventing conversion of 5mC to 5hmC: specifically recognizes and binds histone H3 dimethylated at 'Lys-9' (H3K9me2) on maternal genome, and protects maternal genome from TET3-mediated conversion to 5hmC and subsequent DNA demethylation. Does not bind paternal chromatin, which is mainly packed into protamine and does not contain much H3K9me2 mark. Also protects imprinted loci that are marked with H3K9me2 in mature sperm from DNA demethylation in early embryogenesis. May be important for the totipotent/pluripotent states continuing through preimplantation development. Also involved in chromatin condensation in oocytogenesis. The sequence is that of Developmental pluripotency-associated protein 3 (Dppa3) from Rattus norvegicus (Rat).